The sequence spans 744 residues: Cytoskeleton-associated protein 2-like (744 aa).

Disordered stretches follow at residues 35 to 56 (YLKAKNNCPNPPHSKSTIGPKK), 76 to 169 (LQSR…THVE), 182 to 216 (KENLPQDLPNSERKPNPESWTINKPQTNQTKSSLA), 317 to 337 (TVTEQKVKHSKPSTHPSVLQG), and 428 to 452 (NKTAPRTQAGGPTISGRGVPNGAQT). Polar residues-rich tracts occupy residues 76–86 (LQSRPANITRS), 102–129 (SESVSSNPNGKPPGNSQQLRGFGSSTDG), and 137–154 (GSLNVQKLKTTKQQVTDQ). K195 is covalently cross-linked (Glycyl lysine isopeptide (Lys-Gly) (interchain with G-Cter in SUMO1); alternate). K195 participates in a covalent cross-link: Glycyl lysine isopeptide (Lys-Gly) (interchain with G-Cter in SUMO2); alternate. The span at 199–216 (ESWTINKPQTNQTKSSLA) shows a compositional bias: polar residues. S744 is subject to Phosphoserine.

This sequence belongs to the CKAP2 family. Post-translationally, ubiquitinated by the anaphase promoting complex/cyclosome (APC/C).

The protein localises to the cytoplasm. It is found in the cytoskeleton. The protein resides in the spindle pole. Its function is as follows. Microtubule-associated protein required for mitotic spindle formation and cell-cycle progression in neural progenitor cells. The protein is Cytoskeleton-associated protein 2-like (CKAP2L) of Bos taurus (Bovine).